Reading from the N-terminus, the 284-residue chain is MMDDSLRVSILSEALPYIQRFSGRKIVVKYGGSIMEDEKLKEAFFRDIALLSSVGVCPVVIHGGGPEINRWLNKLEISPKFENGLRVTDEKTMEIVEMVLMGRVNKQIVRGINKTGSLAVGISGLDGNLIQSRELGDGSHGLVGEVTQINPELLDPLIAKGYIPVISSIGSTADGISHNINADFVAGEVAAAINAEKLILLTDTPGILKEGDNPNSLVKQINLKDARKFIEKNIVSNGMLPKTECCIRALAQGVKAAHIIDGRIEHSLLLEIFTNSGIGTMINA.

Substrate is bound by residues 64–65 (GG), Arg-86, and Asn-179.

It belongs to the acetylglutamate kinase family. ArgB subfamily.

Its subcellular location is the cytoplasm. The catalysed reaction is N-acetyl-L-glutamate + ATP = N-acetyl-L-glutamyl 5-phosphate + ADP. It functions in the pathway amino-acid biosynthesis; L-arginine biosynthesis; N(2)-acetyl-L-ornithine from L-glutamate: step 2/4. Catalyzes the ATP-dependent phosphorylation of N-acetyl-L-glutamate. This is Acetylglutamate kinase from Prochlorococcus marinus subsp. pastoris (strain CCMP1986 / NIES-2087 / MED4).